The following is a 295-amino-acid chain: Pyridoxal 5'-phosphate synthase subunit PdxS (295 aa).

A D-ribose 5-phosphate-binding site is contributed by Asp25. Catalysis depends on Lys82, which acts as the Schiff-base intermediate with D-ribose 5-phosphate. Gly154 contributes to the D-ribose 5-phosphate binding site. Arg166 contacts D-glyceraldehyde 3-phosphate. Residues Gly215 and 236–237 each bind D-ribose 5-phosphate; that span reads GS.

Belongs to the PdxS/SNZ family. As to quaternary structure, in the presence of PdxT, forms a dodecamer of heterodimers.

The catalysed reaction is aldehydo-D-ribose 5-phosphate + D-glyceraldehyde 3-phosphate + L-glutamine = pyridoxal 5'-phosphate + L-glutamate + phosphate + 3 H2O + H(+). Its pathway is cofactor biosynthesis; pyridoxal 5'-phosphate biosynthesis. In terms of biological role, catalyzes the formation of pyridoxal 5'-phosphate from ribose 5-phosphate (RBP), glyceraldehyde 3-phosphate (G3P) and ammonia. The ammonia is provided by the PdxT subunit. Can also use ribulose 5-phosphate and dihydroxyacetone phosphate as substrates, resulting from enzyme-catalyzed isomerization of RBP and G3P, respectively. This chain is Pyridoxal 5'-phosphate synthase subunit PdxS, found in Bacillus anthracis (strain A0248).